The following is a 287-amino-acid chain: Pyridoxal kinase PdxY (287 aa).

Substrate-binding positions include S9 and 44–45 (MQ). Residues D111, A142, E147, and K180 each coordinate ATP. Substrate is bound at residue D221.

Belongs to the pyridoxine kinase family. PdxY subfamily. As to quaternary structure, homodimer. Mg(2+) is required as a cofactor.

It catalyses the reaction pyridoxal + ATP = pyridoxal 5'-phosphate + ADP + H(+). It functions in the pathway cofactor metabolism; pyridoxal 5'-phosphate salvage; pyridoxal 5'-phosphate from pyridoxal: step 1/1. In terms of biological role, pyridoxal kinase involved in the salvage pathway of pyridoxal 5'-phosphate (PLP). Catalyzes the phosphorylation of pyridoxal to PLP. The protein is Pyridoxal kinase PdxY of Burkholderia mallei (strain ATCC 23344).